A 130-amino-acid chain; its full sequence is UPF0102 protein Cthe_0758 (130 aa).

The protein belongs to the UPF0102 family.

This chain is UPF0102 protein Cthe_0758, found in Acetivibrio thermocellus (strain ATCC 27405 / DSM 1237 / JCM 9322 / NBRC 103400 / NCIMB 10682 / NRRL B-4536 / VPI 7372) (Clostridium thermocellum).